We begin with the raw amino-acid sequence, 122 residues long: MTAASRQEVLGLYRSFFRLARKWQAASGQMEDTIKEKQYILNEARTLFQKNKNLTDPDLIKQCIDECTARIEIGLHYQIPYPRPIHLPPMGLTPRRGRGLQTQEKLRKFSKPLYLKSHDEVS.

The protein belongs to the complex I LYR family.

In terms of biological role, may promote cell proliferation and inhibition of apoptosis of preadipocytes. The polypeptide is LYR motif-containing protein 1 (Lyrm1) (Rattus norvegicus (Rat)).